The primary structure comprises 457 residues: Chromosomal replication initiator protein DnaA (457 aa).

The domain I, interacts with DnaA modulators stretch occupies residues 1–73 (MANNYQTLYD…SKYLSEEFKK (73 aa)). Residues 73 to 108 (KENIVNFEFIIDNEKLLINSNFLIKETNIKNRFNFS) are domain II. The segment at 109–331 (DELLRYNFNN…GNLKQICFWA (223 aa)) is domain III, AAA+ region. 4 residues coordinate ATP: Gly-156, Gly-158, Lys-159, and Thr-160. The segment at 332–457 (DNDTNKDLII…LQINLIINKF (126 aa)) is domain IV, binds dsDNA.

This sequence belongs to the DnaA family. As to quaternary structure, oligomerizes as a right-handed, spiral filament on DNA at oriC.

The protein localises to the cytoplasm. Its function is as follows. Plays an essential role in the initiation and regulation of chromosomal replication. ATP-DnaA binds to the origin of replication (oriC) to initiate formation of the DNA replication initiation complex once per cell cycle. Binds the DnaA box (a 9 base pair repeat at the origin) and separates the double-stranded (ds)DNA. Forms a right-handed helical filament on oriC DNA; dsDNA binds to the exterior of the filament while single-stranded (ss)DNA is stabiized in the filament's interior. The ATP-DnaA-oriC complex binds and stabilizes one strand of the AT-rich DNA unwinding element (DUE), permitting loading of DNA polymerase. After initiation quickly degrades to an ADP-DnaA complex that is not apt for DNA replication. Binds acidic phospholipids. This chain is Chromosomal replication initiator protein DnaA, found in Ureaplasma parvum serovar 3 (strain ATCC 700970).